A 119-amino-acid chain; its full sequence is Large ribosomal subunit protein uL14 (119 aa).

Belongs to the universal ribosomal protein uL14 family. As to quaternary structure, part of the 50S ribosomal subunit. Forms a cluster with proteins L3 and L19. In the 70S ribosome, L14 and L19 interact and together make contacts with the 16S rRNA in bridges B5 and B8.

Functionally, binds to 23S rRNA. Forms part of two intersubunit bridges in the 70S ribosome. The sequence is that of Large ribosomal subunit protein uL14 from Ehrlichia canis (strain Jake).